Consider the following 365-residue polypeptide: Caffeic acid 3-O-methyltransferase 1 (365 aa).

130–136 (MNQDKVL) is a substrate binding site. The tract at residues 162 to 180 (AFEYHGTDPRFNKVFNKGM) is substrate binding. G208, D231, D251, M252, and K265 together coordinate S-adenosyl-L-methionine. Residue H269 is the Proton acceptor of the active site.

The protein belongs to the class I-like SAM-binding methyltransferase superfamily. Cation-independent O-methyltransferase family. COMT subfamily. In terms of assembly, homodimer.

The catalysed reaction is (E)-caffeate + S-adenosyl-L-methionine = (E)-ferulate + S-adenosyl-L-homocysteine + H(+). Its pathway is aromatic compound metabolism; phenylpropanoid biosynthesis. Catalyzes the conversion of caffeic acid to ferulic acid and of 5-hydroxyferulic acid to sinapic acid. The resulting products may subsequently be converted to the corresponding alcohols that are incorporated into lignins. This is Caffeic acid 3-O-methyltransferase 1 (HOMT1) from Populus kitakamiensis (Aspen).